The primary structure comprises 440 residues: D-serine dehydratase (440 aa).

Lys116 carries the N6-(pyridoxal phosphate)lysine modification.

It belongs to the serine/threonine dehydratase family. DsdA subfamily. As to quaternary structure, monomer. Requires pyridoxal 5'-phosphate as cofactor.

It carries out the reaction D-serine = pyruvate + NH4(+). The protein is D-serine dehydratase of Salmonella typhi.